The primary structure comprises 805 residues: Phosphoinositide 3-kinase adapter protein 1 (805 aa).

One can recognise a TIR domain in the interval 8–145 (RGCDILIVYS…AVKKAISEDS (138 aa)). A necessary and sufficient to mediate inhibition of NF-kappa-B downstream of activated TLRs; may mediate interaction with MYD88 and TIRAP region spans residues 10 to 144 (CDILIVYSPD…AAVKKAISED (135 aa)). Residues 145-165 (SGCDSVTDTEPEDEKVVSYSK) are disordered. The 137-residue stretch at 181–317 (VQPDRIRCGA…NIPASGLHLF (137 aa)) folds into the DBB domain. The residue at position 263 (Tyr263) is a Phosphotyrosine. 3 positions are modified to phosphotyrosine; by SYK: Tyr419, Tyr444, and Tyr459. Position 513 is a phosphotyrosine; by ABL1 (Tyr513). The interval 527 to 547 (ASRPPVPVPRPETTAPGAHQL) is disordered. 2 positions are modified to phosphotyrosine; by ABL1: Tyr553 and Tyr570. The disordered stretch occupies residues 571-590 (VSSESIRKGPPVRPWRDRPQ). Phosphotyrosine; by ABL1 is present on Tyr594. Ser642 is subject to Phosphoserine. Residues 645-667 (FQQENLKRLRDSITRRQREKQKS) are a coiled coil. Residues 654-672 (RDSITRRQREKQKSGKQTD) are compositionally biased toward basic and acidic residues. Residues 654 to 679 (RDSITRRQREKQKSGKQTDLEITVPI) are disordered. Residue Tyr694 is modified to Phosphotyrosine; by ABL1. The segment at 697–805 (GPRKSVIPPR…PPPPVPPRGR (109 aa)) is disordered. A compositionally biased stretch (basic and acidic residues) spans 707 to 716 (TELRRGDWKT). Positions 717-740 (DSTSSTASSTSNRSSTRSLLSVSS) are enriched in low complexity. The residue at position 718 (Ser718) is a Phosphoserine. The segment covering 795–805 (HPPPPVPPRGR) has biased composition (pro residues).

As to quaternary structure, homooligomer. Interacts (phosphorylated on tyrosine residues within YXXM motifs) with PIK3R1 (via SH2 domain); required for BCR- and TLR-mediated activation of phosphoinositide 3-kinase. Interacts (via polyproline C-terminal region) with ABI1 (via SH3 domain); the interaction promotes phosphorylation of PIK3AP1 by ABL1. May interact with MYD88 and TIRAP. Post-translationally, constitutively phosphorylated. Phosphorylated on tyrosine residues in C-terminal region by ABL1. Phosphorylated on tyrosine residues within the YXXM motifs by BTK and SYK. Isoform 1 and isoform 2 are phosphorylated on tyrosine residues, most likely within the YXXM motifs, via CD19 activation. Toll-like receptor activation induces appearance of a phosphorylated form associated with membranes. Expressed in natural killer (NK) cells.

Its subcellular location is the cytoplasm. The protein localises to the cell membrane. Functionally, signaling adapter that contributes to B-cell development by linking B-cell receptor (BCR) signaling to the phosphoinositide 3-kinase (PI3K)-Akt signaling pathway. Has a complementary role to the BCR coreceptor CD19, coupling BCR and PI3K activation by providing a docking site for the PI3K subunit PIK3R1. Alternatively, links Toll-like receptor (TLR) signaling to PI3K activation, a process preventing excessive inflammatory cytokine production. Also involved in the activation of PI3K in natural killer cells. May be involved in the survival of mature B-cells via activation of REL. The chain is Phosphoinositide 3-kinase adapter protein 1 (PIK3AP1) from Homo sapiens (Human).